The sequence spans 377 residues: Tyrosine-protein phosphatase 2 (377 aa).

Residues 27–347 (IDKEFNFILQ…RFCYLAISEA (321 aa)) enclose the Tyrosine-protein phosphatase domain. Residues 77-137 (IDDDDDDEDD…EDHGGSGDEG (61 aa)) form a disordered region. Over residues 78 to 91 (DDDDDDEDDNEDDI) the composition is skewed to acidic residues. Positions 92-102 (IVSNNNNNNNN) are enriched in low complexity. Residues 113–123 (GSSGQSDVMSN) are compositionally biased toward polar residues. The active-site Phosphocysteine intermediate is cysteine 281.

It belongs to the protein-tyrosine phosphatase family. Non-receptor class subfamily.

It carries out the reaction O-phospho-L-tyrosyl-[protein] + H2O = L-tyrosyl-[protein] + phosphate. This is Tyrosine-protein phosphatase 2 (ptpB) from Dictyostelium discoideum (Social amoeba).